Consider the following 243-residue polypeptide: Biosynthetic peptidoglycan transglycosylase (243 aa).

The chain crosses the membrane as a helical span at residues 22-42 (LIVLLVLALMSVLQVIVFRFV).

The protein belongs to the glycosyltransferase 51 family.

It localises to the cell inner membrane. It carries out the reaction [GlcNAc-(1-&gt;4)-Mur2Ac(oyl-L-Ala-gamma-D-Glu-L-Lys-D-Ala-D-Ala)](n)-di-trans,octa-cis-undecaprenyl diphosphate + beta-D-GlcNAc-(1-&gt;4)-Mur2Ac(oyl-L-Ala-gamma-D-Glu-L-Lys-D-Ala-D-Ala)-di-trans,octa-cis-undecaprenyl diphosphate = [GlcNAc-(1-&gt;4)-Mur2Ac(oyl-L-Ala-gamma-D-Glu-L-Lys-D-Ala-D-Ala)](n+1)-di-trans,octa-cis-undecaprenyl diphosphate + di-trans,octa-cis-undecaprenyl diphosphate + H(+). The protein operates within cell wall biogenesis; peptidoglycan biosynthesis. Peptidoglycan polymerase that catalyzes glycan chain elongation from lipid-linked precursors. This is Biosynthetic peptidoglycan transglycosylase from Xylella fastidiosa (strain 9a5c).